The sequence spans 156 residues: Small ribosomal subunit protein uS7 (156 aa).

It belongs to the universal ribosomal protein uS7 family. Part of the 30S ribosomal subunit. Contacts proteins S9 and S11.

Its function is as follows. One of the primary rRNA binding proteins, it binds directly to 16S rRNA where it nucleates assembly of the head domain of the 30S subunit. Is located at the subunit interface close to the decoding center, probably blocks exit of the E-site tRNA. In Lactobacillus acidophilus (strain ATCC 700396 / NCK56 / N2 / NCFM), this protein is Small ribosomal subunit protein uS7.